A 203-amino-acid chain; its full sequence is Undecaprenyl phosphate transporter A (203 aa).

A run of 5 helical transmembrane segments spans residues 16 to 36 (AIFI…EIIL), 48 to 68 (LSIL…LLIL), 108 to 128 (YGVW…LITI), 137 to 157 (VVTF…GLIL), and 173 to 193 (LHTY…YFAI).

This sequence belongs to the DedA family.

Its subcellular location is the cell membrane. Functionally, flippase that catalyzes the transport of undecaprenyl phosphate (UndP) across the cytoplasmic membrane, from the external side to the cytoplasmic side. Is involved in UndP recycling during peptidoglycan synthesis. The chain is Undecaprenyl phosphate transporter A from Staphylococcus aureus (strain NCTC 8325 / PS 47).